The chain runs to 300 residues: Probable acetyltransferase Rv3034c (300 aa).

Residues M1–A25 form the signal peptide.

It belongs to the transferase hexapeptide repeat family.

In terms of biological role, may be involved in the biosynthesis of 6-O-methylglucosyl-containing lipopolysaccharides (MGLP). Functionally, regulates host peroxisome homeostasis in response to intracellular redox levels to favor mycobacterial infection in macrophage. Induces the expression of host peroxisome biogenesis and proliferation factors as well as peroxisome associated enzymes. Inhibits the induction of host pexophagy mechanism by down-regulating the expression of pexophagy associated proteins and adapter molecules in infected macrophages. However, during increased oxidative stress conditions, it induces degradation of dysfunctional and damaged peroxisomes. Regulation of peroxisome biogenesis and degradation is dependent upon host p-mTORC1 mediated signaling pathway. This is Probable acetyltransferase Rv3034c from Mycobacterium tuberculosis (strain ATCC 25618 / H37Rv).